Consider the following 241-residue polypeptide: Gamma-interferon-inducible lysosomal thiol reductase-like protein (241 aa).

The first 18 residues, 1–18 (MLFKSLLLLSVYAVTCYG), serve as a signal peptide directing secretion. Residues asparagine 105 and asparagine 152 are each glycosylated (N-linked (GlcNAc...) asparagine). Residues 218–235 (STGSAISSLGMIVTVVAV) traverse the membrane as a helical segment.

The protein belongs to the GILT family. Salivary gland (at protein level). Low-level expression in midgut (at protein level). Expressed in head and leg tissues. Ovary. Fat body. In terms of tissue distribution, (Microbial infection) Detected with Plasmodium berghei sporozoites isolated from the saliva of infected Anopheles gambiae mosquitoes (at protein level).

The protein localises to the membrane. Functionally, required for normal development of ovary and testis. In terms of biological role, (Microbial infection) Interacts with the surface of Plasmodium berghei sporozoites. Reduces P.berghei sporozoite cell traversal activity and transmission. Limits the motility of P.berghei sporozoites. Decreases the levels of host liver infection by P.berghei sporozoites. Does not affect P.berghei sporozoite viability. Indirectly promotes P.berghei survival in mosquitoes by influencing ovarian development and the subsequent production of 20-hydroxyecdysone and vitellogenin, which, in turn, modulates TEP1-dependent parasite killing. Promotes P.berghei infection in mosquitoes, most likely impacting the oocyst stage of parasite development. Its function is as follows. (Microbial infection) Promotes Plasmodium falciparum survival in mosquitoes. The polypeptide is Gamma-interferon-inducible lysosomal thiol reductase-like protein (Anopheles gambiae (African malaria mosquito)).